The primary structure comprises 56 residues: Ovomucoid (56 aa).

The 51-residue stretch at 6-56 (VDCSDHPKPACLQEQKPLCGSDNKTYDNKCSFCNAVVDSNGTLTLSHFGKC) folds into the Kazal-like domain. 3 disulfides stabilise this stretch: C8-C38, C16-C35, and C24-C56. A glycan (N-linked (GlcNAc...) asparagine) is linked at N45.

The protein localises to the secreted. This chain is Ovomucoid, found in Pipile pipile (Trinidad piping guan).